A 214-amino-acid chain; its full sequence is Intermembrane phospholipid transport system binding protein MlaC (214 aa).

The N-terminal stretch at 1 to 28 (MNLIQLKKWFTILTFVLTAFLVTRTAIA) is a signal peptide.

The protein belongs to the MlaC/ttg2D family.

Its subcellular location is the periplasm. In terms of biological role, involved in a phospholipid transport pathway that maintains lipid asymmetry in the outer membrane by retrograde trafficking of phospholipids from the outer membrane to the inner membrane. May transfer phospholipid across the periplasmic space and deliver it to the MlaFEDB complex at the inner membrane. In Haemophilus influenzae (strain ATCC 51907 / DSM 11121 / KW20 / Rd), this protein is Intermembrane phospholipid transport system binding protein MlaC.